The following is a 60-amino-acid chain: Metallothionein (60 aa).

The segment at 1-28 (MDPCECSKTGNCTCGGSCTCKNCSCTSC) is beta. A divalent metal cation contacts are provided by C4, C6, C12, C14, C18, C20, C23, C25, C28, C32, C33, C35, C36, C40, C43, C47, C49, C54, C58, and C59. Residues 29 to 60 (KKSCCSCCPSGCSKCASGCVCKGKTCDTSCCQ) form an alpha region.

It belongs to the metallothionein superfamily. Type 1 family.

Functionally, metallothioneins have a high content of cysteine residues that bind various heavy metals. The sequence is that of Metallothionein (mt) from Gobiomorphus cotidianus (New Zealand common bully).